We begin with the raw amino-acid sequence, 247 residues long: Protein GrpE (247 aa).

Disordered stretches follow at residues 1-68 (MKKN…KNDD) and 226-247 (PAEKQDEKKAEESEAADKKNEN). Composition is skewed to basic and acidic residues over residues 7-35 (KHADKKEAAKEELEKDLQPKDESAVKDEQ), 43-54 (TSKENPQEDKAE), and 228-247 (EKQDEKKAEESEAADKKNEN).

This sequence belongs to the GrpE family. In terms of assembly, homodimer.

Its subcellular location is the cytoplasm. Functionally, participates actively in the response to hyperosmotic and heat shock by preventing the aggregation of stress-denatured proteins, in association with DnaK and GrpE. It is the nucleotide exchange factor for DnaK and may function as a thermosensor. Unfolded proteins bind initially to DnaJ; upon interaction with the DnaJ-bound protein, DnaK hydrolyzes its bound ATP, resulting in the formation of a stable complex. GrpE releases ADP from DnaK; ATP binding to DnaK triggers the release of the substrate protein, thus completing the reaction cycle. Several rounds of ATP-dependent interactions between DnaJ, DnaK and GrpE are required for fully efficient folding. The protein is Protein GrpE of Treponema denticola (strain ATCC 35405 / DSM 14222 / CIP 103919 / JCM 8153 / KCTC 15104).